A 689-amino-acid chain; its full sequence is Methionine--tRNA ligase (689 aa).

A 'HIGH' region motif is present at residues Pro-15 to His-25. Zn(2+) contacts are provided by Cys-146, Cys-149, Cys-159, and Cys-162. The 'KMSKS' region signature appears at Lys-332–Ser-336. Lys-335 lines the ATP pocket. The 102-residue stretch at Asp-588 to Lys-689 folds into the tRNA-binding domain.

This sequence belongs to the class-I aminoacyl-tRNA synthetase family. MetG type 1 subfamily. In terms of assembly, homodimer. Zn(2+) is required as a cofactor.

The protein localises to the cytoplasm. It carries out the reaction tRNA(Met) + L-methionine + ATP = L-methionyl-tRNA(Met) + AMP + diphosphate. In terms of biological role, is required not only for elongation of protein synthesis but also for the initiation of all mRNA translation through initiator tRNA(fMet) aminoacylation. This Shewanella baltica (strain OS155 / ATCC BAA-1091) protein is Methionine--tRNA ligase.